Reading from the N-terminus, the 439-residue chain is MGCMCIAMAPRTLLLLIGCQLVFGFNEPLNIVSHLNDDWFLFGDSRSDCTYVENNGHPKLDWLDLDPKLCNSGRISAKSGNSLFRSFHFIDFYNYSGEGDQVIFYEGVNFSPSHGFKCLAYGDNKRWMGNKARFYARVYEKMAQYRSLSFVNVSYAYGGNAKPTSICKDKTLTLNNPTFISKESNYVDYYYESEANFTLQGCDEFIVPLCVFNGHSKGSSSDPANKYYTDSQSYYNMDTGVLYGFNSTLDVGNTVQNPGLDLTCRYLALTPGNYKAVSLEYLLSLPSKAICLRKPKSFMPVQVVDSRWNSTRQSDNMTAVACQLPYCFFRNTSADYSGGTHDVHHGDFHFRQLLSGLLYNVSCIAQQGAFVYNNVSSSWPAYGYGHCPTAANIGYMAPVCIYDPLPVILLGVLLGIAVLIIVFLMFYFMTDSGVRLHEA.

The N-terminal stretch at 1–22 is a signal peptide; the sequence is MGCMCIAMAPRTLLLLIGCQLV. The tract at residues 12–132 is esterase domain 1; sequence TLLLLIGCQL…DNKRWMGNKA (121 aa). The Virion surface portion of the chain corresponds to 23–407; the sequence is FGFNEPLNIV…PVCIYDPLPV (385 aa). The Nucleophile role is filled by serine 45. Cysteine 49 and cysteine 70 are disulfide-bonded. N-linked (GlcNAc...) asparagine; by host glycans are attached at residues asparagine 94, asparagine 152, asparagine 196, asparagine 246, asparagine 309, and asparagine 316. The cysteines at positions 118 and 167 are disulfide-linked. Residues 133-281 form a receptor binding region; the sequence is RFYARVYEKM…GNYKAVSLEY (149 aa). Intrachain disulfides connect cysteine 202/cysteine 291 and cysteine 210/cysteine 264. Residues 282–395 are esterase domain 2; the sequence is LLSLPSKAIC…HCPTAANIGY (114 aa). The cysteines at positions 322 and 327 are disulfide-linked. Asparagine 331 carries an N-linked (GlcNAc...) asparagine; by host glycan. Active-site charge relay system residues include aspartate 342 and histidine 345. Residues asparagine 360 and asparagine 374 are each glycosylated (N-linked (GlcNAc...) asparagine; by host). Cysteines 363 and 387 form a disulfide. The helical transmembrane segment at 408-428 threads the bilayer; that stretch reads ILLGVLLGIAVLIIVFLMFYF. At 429–439 the chain is on the intravirion side; sequence MTDSGVRLHEA.

Belongs to the influenza type C/coronaviruses hemagglutinin-esterase family. As to quaternary structure, homodimer; disulfide-linked. Forms a complex with the M protein in the pre-Golgi. Associates then with S-M complex to form a ternary complex S-M-HE. Post-translationally, N-glycosylated in the host RER.

The protein resides in the virion membrane. Its subcellular location is the host cell membrane. The enzyme catalyses N-acetyl-9-O-acetylneuraminate + H2O = N-acetylneuraminate + acetate + H(+). It carries out the reaction N-acetyl-4-O-acetylneuraminate + H2O = N-acetylneuraminate + acetate + H(+). Its function is as follows. Structural protein that makes short spikes at the surface of the virus. Contains receptor binding and receptor-destroying activities. Mediates de-O-acetylation of N-acetyl-4-O-acetylneuraminic acid, which is probably the receptor determinant recognized by the virus on the surface of erythrocytes and susceptible cells. This receptor-destroying activity is important for virus release as it probably helps preventing self-aggregation and ensures the efficient spread of the progeny virus from cell to cell. May serve as a secondary viral attachment protein for initiating infection, the spike protein being the major one. May become a target for both the humoral and the cellular branches of the immune system. The chain is Hemagglutinin-esterase from Murine coronavirus (strain S) (MHV-S).